The sequence spans 173 residues: Cytochrome b6-f complex subunit 4, chloroplastic (173 aa).

A chloroplast-targeting transit peptide spans 1-14 (ESALERRSSSVVMN). 3 helical membrane passes run 49-69 (LLYM…GLAV), 108-128 (LLGV…PFIE), and 144-164 (SVFL…TLPI).

The protein belongs to the cytochrome b family. PetD subfamily. The 4 large subunits of the cytochrome b6-f complex are cytochrome b6, subunit IV (17 kDa polypeptide, petD), cytochrome f and the Rieske protein, while the 4 small subunits are petG, petL, petM and petN. The complex functions as a dimer.

It localises to the plastid. It is found in the chloroplast thylakoid membrane. Component of the cytochrome b6-f complex, which mediates electron transfer between photosystem II (PSII) and photosystem I (PSI), cyclic electron flow around PSI, and state transitions. The chain is Cytochrome b6-f complex subunit 4, chloroplastic from Euglena gracilis.